The primary structure comprises 242 residues: Putative serine/threonine-protein kinase (242 aa).

In terms of domain architecture, Protein kinase spans 49–242 (FSSKNKVGEG…KSDVYSFGVL (194 aa)). ATP contacts are provided by residues 55–63 (VGEGGCGAV) and Lys-77. Asp-177 (proton acceptor) is an active-site residue.

The protein belongs to the protein kinase superfamily. Ser/Thr protein kinase family.

It carries out the reaction L-seryl-[protein] + ATP = O-phospho-L-seryl-[protein] + ADP + H(+). It catalyses the reaction L-threonyl-[protein] + ATP = O-phospho-L-threonyl-[protein] + ADP + H(+). This is Putative serine/threonine-protein kinase from Helianthus annuus (Common sunflower).